We begin with the raw amino-acid sequence, 245 residues long: 1-(5-phosphoribosyl)-5-[(5-phosphoribosylamino)methylideneamino] imidazole-4-carboxamide isomerase (245 aa).

The Proton acceptor role is filled by Asp8. Asp129 functions as the Proton donor in the catalytic mechanism.

This sequence belongs to the HisA/HisF family.

Its subcellular location is the cytoplasm. It catalyses the reaction 1-(5-phospho-beta-D-ribosyl)-5-[(5-phospho-beta-D-ribosylamino)methylideneamino]imidazole-4-carboxamide = 5-[(5-phospho-1-deoxy-D-ribulos-1-ylimino)methylamino]-1-(5-phospho-beta-D-ribosyl)imidazole-4-carboxamide. The protein operates within amino-acid biosynthesis; L-histidine biosynthesis; L-histidine from 5-phospho-alpha-D-ribose 1-diphosphate: step 4/9. In Rhodopseudomonas palustris (strain BisA53), this protein is 1-(5-phosphoribosyl)-5-[(5-phosphoribosylamino)methylideneamino] imidazole-4-carboxamide isomerase.